The sequence spans 151 residues: Deoxyuridine 5'-triphosphate nucleotidohydrolase (151 aa).

Substrate contacts are provided by residues 70–72 (RSG), Asn-83, 87–89 (LID), and Met-97.

Belongs to the dUTPase family. Requires Mg(2+) as cofactor.

The enzyme catalyses dUTP + H2O = dUMP + diphosphate + H(+). The protein operates within pyrimidine metabolism; dUMP biosynthesis; dUMP from dCTP (dUTP route): step 2/2. This enzyme is involved in nucleotide metabolism: it produces dUMP, the immediate precursor of thymidine nucleotides and it decreases the intracellular concentration of dUTP so that uracil cannot be incorporated into DNA. In Pseudomonas fluorescens (strain ATCC BAA-477 / NRRL B-23932 / Pf-5), this protein is Deoxyuridine 5'-triphosphate nucleotidohydrolase.